Here is a 71-residue protein sequence, read N- to C-terminus: Conotoxin AbVIG (71 aa).

An N-terminal signal peptide occupies residues 1-17; it reads VLIIAVLFLTACQLTTA. Residues 18–40 constitute a propeptide that is removed on maturation; that stretch reads ETSSRGKQKHRALRSTDKNSRMT. 3 disulfide bridges follow: Cys-43-Cys-57, Cys-50-Cys-61, and Cys-56-Cys-68.

The protein belongs to the conotoxin O1 superfamily. In terms of tissue distribution, expressed by the venom duct.

Its subcellular location is the secreted. This Conus abbreviatus (Abbreviated cone) protein is Conotoxin AbVIG.